A 533-amino-acid polypeptide reads, in one-letter code: Death domain-containing ATP nucleosidase (533 aa).

A death domain region spans residues methionine 1–serine 262. Residues serine 184–serine 248 form a disordered region. A compositionally biased stretch (polar residues) spans proline 218–threonine 227. The segment covering serine 236–serine 248 has biased composition (low complexity). The interval aspartate 263–methionine 533 is purine nucleoside phosphorylase domain.

The enzyme catalyses ATP + H2O = D-ribose 5-triphosphate + adenine. It carries out the reaction dATP + H2O = 2-deoxyribose 5-triphosphate + adenine. Its function is as follows. The C-terminal purine nucleoside phosphorylase (PNP) domain cleaves the N-glycosidic bond of ATP, and to a lesser extent dATP, to release adenine and a sugar triphosphate; has weak activity on ADP and AMP and no activity on dADP, dAMP, adenosine, deoxyadenosine or other (d)NTPs. This Amphimedon queenslandica (Sponge) protein is Death domain-containing ATP nucleosidase (109585858).